A 217-amino-acid chain; its full sequence is Chorionic somatomammotropin hormone 2 (217 aa).

Positions 1 to 26 are cleaved as a signal peptide; it reads MAAGSRTSLLLAFALLCLPWLQEAGA. Histidine 44 contacts Zn(2+). Cysteine 79 and cysteine 191 form a disulfide bridge. Glutamate 200 is a binding site for Zn(2+). The cysteines at positions 208 and 215 are disulfide-linked.

This sequence belongs to the somatotropin/prolactin family. In terms of assembly, can be found in a monomeric as well as dimeric form.

The protein resides in the secreted. Its function is as follows. Produced only during pregnancy and is involved in stimulating lactation, fetal growth and metabolism. Does not interact with GHR but only activates PRLR through zinc-induced dimerization. The protein is Chorionic somatomammotropin hormone 2 (CSH2) of Homo sapiens (Human).